We begin with the raw amino-acid sequence, 299 residues long: Troponin T, cardiac muscle (299 aa).

The segment covering Met-1–Val-71 has biased composition (acidic residues). Disordered regions lie at residues Met-1–Val-97 and Asp-137–Lys-220. Ser-2 bears the N-acetylserine mark. The residue at position 2 (Ser-2) is a Phosphoserine. 2 stretches are compositionally biased toward basic and acidic residues: residues Asp-137–Arg-185 and Gln-204–Lys-220. Thr-205 carries the post-translational modification Phosphothreonine; by PKC/PRKCA. Ser-209 is subject to Phosphoserine; by PKC/PRKCA. Thr-214 carries the phosphothreonine; by PKC/PRKCA and RAF1 modification. At Thr-295 the chain carries Phosphothreonine; by PKC/PRKCA.

It belongs to the troponin T family. Post-translationally, phosphorylation at Thr-214 by PRKCA induces significant reduction in myofilament calcium sensitivity and actomyosin ATPase activity.

Troponin T is the tropomyosin-binding subunit of troponin, the thin filament regulatory complex which confers calcium-sensitivity to striated muscle actomyosin ATPase activity. The protein is Troponin T, cardiac muscle (Tnnt2) of Rattus norvegicus (Rat).